Consider the following 452-residue polypeptide: Glycine receptor subunit alpha-2 (452 aa).

The signal sequence occupies residues 1 to 27 (MNRQLVNILTALFAFFLETNHFRTAFC). The Extracellular portion of the chain corresponds to 28-256 (KDHDSRSGKQ…KFHLERQMGY (229 aa)). Asparagine 72 carries an N-linked (GlcNAc...) asparagine glycan. Residue arginine 99 coordinates glycine. Position 99 (arginine 99) interacts with strychnine. Asparagine 103 carries N-linked (GlcNAc...) asparagine glycosylation. Serine 163 provides a ligand contact to glycine. A disulfide bridge connects residues cysteine 172 and cysteine 186. Zn(2+) is bound by residues glutamate 226 and glutamate 228. Cysteines 232 and 243 form a disulfide. Glycine is bound at residue threonine 238. Histidine 249 is a Zn(2+) binding site. Residues 257–278 (YLIQMYIPSLLIVILSWVSFWI) form a helical membrane-spanning segment. At 279 to 283 (NMDAA) the chain is on the cytoplasmic side. Residues 284 to 304 (PARVALGITTVLTMTTQSSGS) form a helical membrane-spanning segment. The Extracellular segment spans residues 305 to 315 (RASLPKVSYVK). A helical membrane pass occupies residues 316–336 (AIDIWMAVCLLFVFAALLEYA). The Cytoplasmic segment spans residues 337 to 420 (AVNFVSRQHK…FVDRAKRIDT (84 aa)). Residues 421-441 (ISRAAFPLAFLIFNIFYWITY) traverse the membrane as a helical segment. At 442–452 (KIIRHEDVHKK) the chain is on the extracellular side.

Belongs to the ligand-gated ion channel (TC 1.A.9) family. Glycine receptor (TC 1.A.9.3) subfamily. GLRA2 sub-subfamily. Interacts with GLRB. Heteropentamer composed of GLRA2 and GLRB. Functional GLRB-GLRA2 heteropentamers contain four GLRA2 subunits and one GLRB subunit, although alternative subunit composition cannot be excluded. Homopentamer (in vitro). Both homopentamers and heteropentamers form functional ion channels, but their characteristics are subtly different.

The protein localises to the postsynaptic cell membrane. The protein resides in the synapse. It is found in the cell membrane. It localises to the cell projection. The enzyme catalyses chloride(in) = chloride(out). Channel opening is triggered by extracellular glycine. Channel opening is also triggered by taurine and beta-alanine. Inhibited by strychnine. Inhibited by picrotoxin. Channel activity is potentiated by 10-100 uM Zn(2+). Channel activity is marginally increased by 50 mM ethanol; it is strongly increased by a combination of 0.5 uM Zn(2+) and 50 mM ethanol. Channel activity is inhibited by 100-1000 uM Zn(2+). Subunit of heteromeric glycine-gated chloride channels. Plays a role in synaptic plasticity. Contributes to the generation of inhibitory postsynaptic currents, and is involved in the down-regulation of neuronal excitability. Plays a role in cellular responses to ethanol. The polypeptide is Glycine receptor subunit alpha-2 (Homo sapiens (Human)).